The chain runs to 248 residues: MQPLQSAGYDRAITVFSPDGRLFQVEYAREAVKRGTTSLGVKSKEGIVLVVDKRPTSKLVEPKSIEKIFQIDEHIGAATSGLVADARAIIEKARLEAQINRITYNEPIRVESLAKKICDMKQMYTQHGGVRPFGTALIIGGVNGRGCRLFETDPSGALIEYKATAIGAGRPAAMEEFEKKYSDDMNLNQAIELALDAVYEATEGKTTPESVEIAVIEAADKKYRRLPDDEIRDHVEELLIRKEKEEEE.

It belongs to the peptidase T1A family. In terms of assembly, the 20S proteasome core is composed of 14 alpha and 14 beta subunits that assemble into four stacked heptameric rings, resulting in a barrel-shaped structure. The two inner rings, each composed of seven catalytic beta subunits, are sandwiched by two outer rings, each composed of seven alpha subunits. The catalytic chamber with the active sites is on the inside of the barrel. Has a gated structure, the ends of the cylinder being occluded by the N-termini of the alpha-subunits. Is capped at one or both ends by the proteasome regulatory ATPase, PAN.

Its subcellular location is the cytoplasm. Its activity is regulated as follows. The formation of the proteasomal ATPase PAN-20S proteasome complex, via the docking of the C-termini of PAN into the intersubunit pockets in the alpha-rings, triggers opening of the gate for substrate entry. Interconversion between the open-gate and close-gate conformations leads to a dynamic regulation of the 20S proteasome proteolysis activity. In terms of biological role, component of the proteasome core, a large protease complex with broad specificity involved in protein degradation. The protein is Proteasome subunit alpha of Methanothermobacter thermautotrophicus (strain ATCC 29096 / DSM 1053 / JCM 10044 / NBRC 100330 / Delta H) (Methanobacterium thermoautotrophicum).